The sequence spans 429 residues: Glutamate-1-semialdehyde 2,1-aminomutase 1 (429 aa).

Lys267 carries the post-translational modification N6-(pyridoxal phosphate)lysine.

It belongs to the class-III pyridoxal-phosphate-dependent aminotransferase family. HemL subfamily. Homodimer. Pyridoxal 5'-phosphate is required as a cofactor.

Its subcellular location is the cytoplasm. It carries out the reaction (S)-4-amino-5-oxopentanoate = 5-aminolevulinate. Its pathway is porphyrin-containing compound metabolism; protoporphyrin-IX biosynthesis; 5-aminolevulinate from L-glutamyl-tRNA(Glu): step 2/2. The polypeptide is Glutamate-1-semialdehyde 2,1-aminomutase 1 (Staphylococcus carnosus (strain TM300)).